A 145-amino-acid polypeptide reads, in one-letter code: Ribosomal RNA large subunit methyltransferase H (145 aa).

Residues Leu-68, Gly-95, and 113–118 (FSKMTF) contribute to the S-adenosyl-L-methionine site.

This sequence belongs to the RNA methyltransferase RlmH family. Homodimer.

It is found in the cytoplasm. It carries out the reaction pseudouridine(1915) in 23S rRNA + S-adenosyl-L-methionine = N(3)-methylpseudouridine(1915) in 23S rRNA + S-adenosyl-L-homocysteine + H(+). In terms of biological role, specifically methylates the pseudouridine at position 1915 (m3Psi1915) in 23S rRNA. In Mycoplasmopsis pulmonis (strain UAB CTIP) (Mycoplasma pulmonis), this protein is Ribosomal RNA large subunit methyltransferase H.